The chain runs to 1602 residues: Calmodulin-regulated spectrin-associated protein 1 (1602 aa).

In terms of domain architecture, Calponin-homology (CH) spans 216 to 331; that stretch reads ESPAHQKVRY…FIAELFWWFE (116 aa). Phosphoserine is present on residues serine 217, serine 371, serine 375, serine 416, and serine 431. The tract at residues 426–471 is disordered; it reads QKQQKSIQGEDIPDQRHRSNSLTRVDGQPRGAAIAWPEKKTRPASQ. Threonine 512 bears the Phosphothreonine mark. Phosphoserine occurs at positions 563, 575, and 589. Basic and acidic residues predominate over residues 603–620; sequence AKEKQVITKEDERGEGRP. The disordered stretch occupies residues 603–637; sequence AKEKQVITKEDERGEGRPRSIVSRRPSEGPQPLVR. Residues serine 629, serine 722, serine 728, serine 738, and serine 740 each carry the phosphoserine modification. A compositionally biased stretch (basic and acidic residues) spans 772–789; it reads KLQEDMKVKEHEDKDDAS. Disordered stretches follow at residues 772-808 and 825-870; these read KLQEDMKVKEHEDKDDASGRSSPCLSTASQMSSVSMA and LNSC…GKDP. Low complexity-rich tracts occupy residues 797–808 and 830–841; these read STASQMSSVSMA and TKSSTSSSQKTT. Positions 857 to 869 are enriched in basic and acidic residues; sequence QKREQSPSQHGKD. The sufficient for interaction with SPTBN1 stretch occupies residues 871–892; it reads ASLLASELVQLHMQLEEKRRAI. Coiled-coil stretches lie at residues 873 to 909 and 1016 to 1048; these read LLASELVQLHMQLEEKRRAIEAQKKKMEALSARQRLK and DVNECDLSIEKLNETISTLQQAILKISQQQEQL. Residues 903–922 are sufficient for interaction with calmodulin; it reads SARQRLKLGKAAFLHVVKKG. Disordered regions lie at residues 1075–1165, 1206–1226, and 1301–1448; these read FVEP…GKCL, KEVGSSSSDVSGKESVPVEEP, and ARVR…DWET. Serine 1080 is modified (phosphoserine). Positions 1103–1114 are enriched in basic and acidic residues; the sequence is RPAELKVPKDRP. A compositionally biased stretch (polar residues) spans 1115-1127; it reads QGSSRSKTPTPSV. The segment covering 1206-1220 has biased composition (low complexity); that stretch reads KEVGSSSSDVSGKES. The stretch at 1291–1343 forms a coiled coil; the sequence is LLKQQRKAEEARVRKQQLEAEVELKRDEARRKAEEDRVRKEEEKARRELIKQE. Positions 1301-1346 are enriched in basic and acidic residues; that stretch reads ARVRKQQLEAEVELKRDEARRKAEEDRVRKEEEKARRELIKQEYLR. Basic residues predominate over residues 1361 to 1372; it reads PKSKPKKPRPKS. A compositionally biased stretch (polar residues) spans 1380–1392; it reads SDSGTKCSSTPDN. Residues 1393–1410 show a composition bias toward low complexity; that stretch reads LSRTQSGSSLSLASAATT. Serine 1398 and serine 1427 each carry phosphoserine. The region spanning 1463 to 1597 is the CKK domain; sequence GPKLFKEPSS…QPKRPAVPKK (135 aa). Tyrosine 1537 carries the post-translational modification Phosphotyrosine.

This sequence belongs to the CAMSAP1 family. In terms of assembly, interacts with spectrin via SPTBN1; the interaction is direct. Interacts with calmodulin; calcium-dependent it prevents interaction with spectrin.

The protein localises to the cytoplasm. It is found in the cytoskeleton. Its function is as follows. Key microtubule-organizing protein that specifically binds the minus-end of non-centrosomal microtubules and regulates their dynamics and organization. Specifically recognizes growing microtubule minus-ends and stabilizes microtubules. Acts on free microtubule minus-ends that are not capped by microtubule-nucleating proteins or other factors and protects microtubule minus-ends from depolymerization. In contrast to CAMSAP2 and CAMSAP3, tracks along the growing tips of minus-end microtubules without significantly affecting the polymerization rate: binds at the very tip of the microtubules minus-end and acts as a minus-end tracking protein (-TIP) that dissociates from microtubules after allowing tubulin incorporation. Through interaction with spectrin may regulate neurite outgrowth. This is Calmodulin-regulated spectrin-associated protein 1 (CAMSAP1) from Homo sapiens (Human).